The sequence spans 598 residues: CBP80/20-dependent translation initiation factor (598 aa).

M1 carries the post-translational modification N-acetylmethionine. Residues 1–18 are compositionally biased toward low complexity; sequence MENSSAASASSEAGSSRS. Disordered regions lie at residues 1–20, 43–90, and 180–336; these read MENSSAASASSEAGSSRSQE, DKTE…SKDN, and IAHT…RIGE. Residues 1–305 form an interaction with NCBP1/CBP80 region; sequence MENSSAASAS…APRSPDTLAP (305 aa). S18 is modified (phosphoserine). Residues 43–55 show a composition bias toward basic and acidic residues; sequence DKTEGDGESERTQ. Positions 56 to 75 are enriched in polar residues; sequence SHISQWTADCSEPLDSSCSF. Over residues 183-198 the composition is skewed to basic residues; sequence TKKLFRRRRNDRRRQQ. Residues 258-272 are compositionally biased toward basic and acidic residues; the sequence is PPGDKGEAGAHRNAK. At T289 the chain carries Phosphothreonine. Position 299 is a phosphoserine (S299). Positions 321–336 are enriched in basic and acidic residues; the sequence is VETKRKDSILPERIGE. In terms of domain architecture, MIF4G spans 376-577; the sequence is IEILNSMRNN…LEVIELHANS (202 aa).

This sequence belongs to the CTIF family. In terms of assembly, interacts with NCBP1/CBP80; the interaction is direct. Associates with the eukaryotic translation initiation factor 3 (eIF-3) complex. As to expression, widely expressed.

Its subcellular location is the cytoplasm. The protein localises to the perinuclear region. Its function is as follows. Specifically required for the pioneer round of mRNA translation mediated by the cap-binding complex (CBC), that takes place during or right after mRNA export via the nuclear pore complex (NPC). Acts via its interaction with the NCBP1/CBP80 component of the CBC complex and recruits the 40S small subunit of the ribosome via eIF3. In contrast, it is not involved in steady state translation, that takes place when the CBC complex is replaced by cytoplasmic cap-binding protein eIF4E. Also required for nonsense-mediated mRNA decay (NMD), the pioneer round of mRNA translation mediated by the cap-binding complex playing a central role in nonsense-mediated mRNA decay (NMD). The protein is CBP80/20-dependent translation initiation factor (CTIF) of Homo sapiens (Human).